A 130-amino-acid chain; its full sequence is Small ribosomal subunit protein uS9 (130 aa).

The protein belongs to the universal ribosomal protein uS9 family.

This is Small ribosomal subunit protein uS9 from Bordetella bronchiseptica (strain ATCC BAA-588 / NCTC 13252 / RB50) (Alcaligenes bronchisepticus).